Consider the following 541-residue polypeptide: Chaperonin GroEL 1 (541 aa).

ATP is bound by residues 29-32 (TLGP), 86-90 (DGTTT), Gly413, 477-479 (NAA), and Asp493.

It belongs to the chaperonin (HSP60) family. Forms a cylinder of 14 subunits composed of two heptameric rings stacked back-to-back. Interacts with the co-chaperonin GroES.

Its subcellular location is the cytoplasm. It carries out the reaction ATP + H2O + a folded polypeptide = ADP + phosphate + an unfolded polypeptide.. Together with its co-chaperonin GroES, plays an essential role in assisting protein folding. The GroEL-GroES system forms a nano-cage that allows encapsulation of the non-native substrate proteins and provides a physical environment optimized to promote and accelerate protein folding. This Paenarthrobacter aurescens (strain TC1) protein is Chaperonin GroEL 1.